A 182-amino-acid polypeptide reads, in one-letter code: Heat shock protein beta-2 (182 aa).

Residues 55 to 163 enclose the sHSP domain; that stretch reads PAGEGSRAGA…DTEVNEVYIS (109 aa).

Belongs to the small heat shock protein (HSP20) family. In terms of assembly, interacts with DMPK; may enhance its kinase activity. Expressed preferentially in skeletal muscle and heart but not in the lens.

It is found in the cytoplasm. It localises to the nucleus. May regulate the kinase DMPK. This Homo sapiens (Human) protein is Heat shock protein beta-2 (HSPB2).